We begin with the raw amino-acid sequence, 295 residues long: Small ribosomal subunit protein uS2 (295 aa).

The tract at residues 264-295 (KFSKTKNIDEETNTEFEQALNDTDENKNADNA) is disordered.

The protein belongs to the universal ribosomal protein uS2 family.

This is Small ribosomal subunit protein uS2 from Rickettsia akari (strain Hartford).